A 266-amino-acid chain; its full sequence is Eukaryotic translation initiation factor 3 subunit J (266 aa).

Disordered stretches follow at residues 1–111 (MAPS…EKDA) and 217–266 (NEKM…DDFM). Positions 26–44 (DEEEEDVLDSWDAAEDSEV) are enriched in acidic residues. Residues 40–82 (EDSEVEREKAAKAAEAKAKAEAEAAANKKSKAQRIQEKKAQRK) adopt a coiled-coil conformation. Basic and acidic residues-rich tracts occupy residues 45-61 (EREK…KAEA) and 73-85 (RIQE…KADA). Acidic residues predominate over residues 86–97 (DAEDSDDSDEDE). Basic and acidic residues-rich tracts occupy residues 98–111 (AERR…EKDA) and 218–230 (EKMK…DKGN). Over residues 254–266 (SYDDDGLDDDDFM) the composition is skewed to acidic residues.

The protein belongs to the eIF-3 subunit J family. As to quaternary structure, component of the eukaryotic translation initiation factor 3 (eIF-3) complex.

It localises to the cytoplasm. In terms of biological role, component of the eukaryotic translation initiation factor 3 (eIF-3) complex, which is involved in protein synthesis of a specialized repertoire of mRNAs and, together with other initiation factors, stimulates binding of mRNA and methionyl-tRNAi to the 40S ribosome. The eIF-3 complex specifically targets and initiates translation of a subset of mRNAs involved in cell proliferation. This Aspergillus niger (strain ATCC MYA-4892 / CBS 513.88 / FGSC A1513) protein is Eukaryotic translation initiation factor 3 subunit J (hcr1).